Here is a 226-residue protein sequence, read N- to C-terminus: Protein Thf1 (226 aa).

Residues 183-213 adopt a coiled-coil conformation; that stretch reads EEKMQKDLDLYRSNLEKMDQLLTVIEEALQA.

It belongs to the THF1 family.

Its function is as follows. May be involved in photosynthetic membrane biogenesis. The polypeptide is Protein Thf1 (Gloeothece citriformis (strain PCC 7424) (Cyanothece sp. (strain PCC 7424))).